Here is a 133-residue protein sequence, read N- to C-terminus: NADPH-dependent 7-cyano-7-deazaguanine reductase (133 aa).

The Thioimide intermediate role is filled by Cys-48. Catalysis depends on Asp-55, which acts as the Proton donor. Residues 70-72 (VEL) and 89-90 (QE) each bind substrate.

Belongs to the GTP cyclohydrolase I family. QueF type 1 subfamily.

It is found in the cytoplasm. The enzyme catalyses 7-aminomethyl-7-carbaguanine + 2 NADP(+) = 7-cyano-7-deazaguanine + 2 NADPH + 3 H(+). It participates in tRNA modification; tRNA-queuosine biosynthesis. Its function is as follows. Catalyzes the NADPH-dependent reduction of 7-cyano-7-deazaguanine (preQ0) to 7-aminomethyl-7-deazaguanine (preQ1). In Thermoanaerobacter pseudethanolicus (strain ATCC 33223 / 39E) (Clostridium thermohydrosulfuricum), this protein is NADPH-dependent 7-cyano-7-deazaguanine reductase.